The chain runs to 830 residues: Serine/threonine-protein kinase atg1 (830 aa).

The Protein kinase domain occupies 14-307 (YVIRSEIGRG…YDGFFSSIVV (294 aa)). Residues 20–28 (IGRGSFAIV) and K43 each bind ATP. Residue D157 is the Proton acceptor of the active site. Position 346 is a phosphoserine (S346). Positions 448-468 (TQLSNESLTHEQSINGNSPSP) are enriched in polar residues. The segment at 448-480 (TQLSNESLTHEQSINGNSPSPNEGVFQGSFSPE) is disordered.

This sequence belongs to the protein kinase superfamily. Ser/Thr protein kinase family. APG1/unc-51/ULK1 subfamily. In terms of assembly, homodimer. Component of the atg1 kinase complex composed of at least atg1, atg13, atg17 and atg101. Interacts directly with atg13. Phosphorylated. Dephosphorylated under depletion of nitrogen.

The catalysed reaction is L-seryl-[protein] + ATP = O-phospho-L-seryl-[protein] + ADP + H(+). It catalyses the reaction L-threonyl-[protein] + ATP = O-phospho-L-threonyl-[protein] + ADP + H(+). Serine/threonine protein kinase involved in the cytoplasm to vacuole transport (Cvt) and found to be essential in autophagy, where it is required for the formation of autophagosomes. Involved in the clearance of protein aggregates which cannot be efficiently cleared by the proteasome. Required for selective autophagic degradation of the nucleus (nucleophagy) as well as for mitophagy which contributes to regulate mitochondrial quantity and quality by eliminating the mitochondria to a basal level to fulfill cellular energy requirements and preventing excess ROS production. Also involved in endoplasmic reticulum-specific autophagic process, in selective removal of ER-associated degradation (ERAD) substrates. Plays a key role in ATG9 and ATG23 cycling through the pre-autophagosomal structure and is necessary to promote ATG18 binding to ATG9 through phosphorylation of ATG9. Catalyzes phosphorylation of ATG4, decreasing the interaction between ATG4 and ATG8 and impairing deconjugation of PE-conjugated forms of ATG8. Autophagy functions to supply nitrogen and is activated when cells cannot access exogenous nitrogen, thus ensuring that they can adapt and subsequently propagate. Finally, atg13 is also required for glycogen storage during stationary phase and has a role in meiosis and sporulation. The chain is Serine/threonine-protein kinase atg1 from Schizosaccharomyces pombe (strain 972 / ATCC 24843) (Fission yeast).